An 85-amino-acid polypeptide reads, in one-letter code: Sec-independent protein translocase protein TatA (85 aa).

Residues Met1–Gly21 traverse the membrane as a helical segment. Positions Met43–Ala85 are disordered. Over residues Asp46–Ala57 the composition is skewed to basic and acidic residues. The segment covering Ala58–Ala73 has biased composition (low complexity). Residues Thr74–Ala85 show a composition bias toward basic and acidic residues.

This sequence belongs to the TatA/E family. In terms of assembly, the Tat system comprises two distinct complexes: a TatABC complex, containing multiple copies of TatA, TatB and TatC subunits, and a separate TatA complex, containing only TatA subunits. Substrates initially bind to the TatABC complex, which probably triggers association of the separate TatA complex to form the active translocon.

The protein resides in the cell inner membrane. Its function is as follows. Part of the twin-arginine translocation (Tat) system that transports large folded proteins containing a characteristic twin-arginine motif in their signal peptide across membranes. TatA could form the protein-conducting channel of the Tat system. This Shewanella sp. (strain ANA-3) protein is Sec-independent protein translocase protein TatA.